The chain runs to 407 residues: Aspartate aminotransferase, cytoplasmic (407 aa).

G39, W136, and N189 together coordinate L-aspartate. The residue at position 253 (K253) is an N6-(pyridoxal phosphate)lysine. R381 serves as a coordination point for L-aspartate.

The protein belongs to the class-I pyridoxal-phosphate-dependent aminotransferase family. Homodimer. Requires pyridoxal 5'-phosphate as cofactor.

It localises to the cytoplasm. The catalysed reaction is L-aspartate + 2-oxoglutarate = oxaloacetate + L-glutamate. In terms of biological role, important for the metabolism of amino acids and Krebs-cycle related organic acids. In plants, it is involved in nitrogen metabolism and in aspects of carbon and energy metabolism. The sequence is that of Aspartate aminotransferase, cytoplasmic from Oryza sativa subsp. japonica (Rice).